The primary structure comprises 87 residues: Large ribosomal subunit protein bL27 (87 aa).

Residues 1–21 (MAHKKAGGSSRNGRDSESKRL) are disordered.

It belongs to the bacterial ribosomal protein bL27 family.

The chain is Large ribosomal subunit protein bL27 from Burkholderia mallei (strain NCTC 10247).